The primary structure comprises 330 residues: Phosphate acyltransferase (330 aa).

Belongs to the PlsX family. In terms of assembly, homodimer. Probably interacts with PlsY.

The protein localises to the cytoplasm. It catalyses the reaction a fatty acyl-[ACP] + phosphate = an acyl phosphate + holo-[ACP]. It functions in the pathway lipid metabolism; phospholipid metabolism. Catalyzes the reversible formation of acyl-phosphate (acyl-PO(4)) from acyl-[acyl-carrier-protein] (acyl-ACP). This enzyme utilizes acyl-ACP as fatty acyl donor, but not acyl-CoA. The polypeptide is Phosphate acyltransferase (Campylobacter hominis (strain ATCC BAA-381 / DSM 21671 / CCUG 45161 / LMG 19568 / NCTC 13146 / CH001A)).